Consider the following 524-residue polypeptide: Translation initiation factor eIF2B subunit delta (524 aa).

The segment at 1-174 (MAAVAVAVRE…RQQVPTRKDY (174 aa)) is disordered. Alanine 2 is subject to N-acetylalanine. Basic and acidic residues-rich tracts occupy residues 8–20 (VREESRSEMKTEL) and 31–40 (LTQEEKLQLR). Serine 12 carries the post-translational modification Phosphoserine. Over residues 41 to 51 (KEKKQQKKKRK) the composition is skewed to basic residues. Residue threonine 86 is modified to Phosphothreonine. 2 stretches are compositionally biased toward basic and acidic residues: residues 96–121 (SKAELRAERRAKQEAERALKQARKGE) and 161–174 (RKPDRQQVPTRKDY). Positions 171-180 (RKDYGSKVSL) are may bind the chemical integrated stress response (ISR) inhibitor ISRIB.

Belongs to the eIF-2B alpha/beta/delta subunits family. In terms of assembly, component of the translation initiation factor 2B (eIF2B) complex which is a heterodecamer of two sets of five different subunits: alpha, beta, gamma, delta and epsilon. Subunits alpha, beta and delta comprise a regulatory subcomplex and subunits epsilon and gamma comprise a catalytic subcomplex. Within the complex, the hexameric regulatory complex resides at the center, with the two heterodimeric catalytic subcomplexes bound on opposite sides.

The protein localises to the cytoplasm. It is found in the cytosol. Its activity is regulated as follows. Activated by the chemical integrated stress response (ISR) inhibitor ISRIB which stimulates guanine nucleotide exchange factor activity for both phosphorylated and unphosphorylated eIF2. Acts as a component of the translation initiation factor 2B (eIF2B) complex, which catalyzes the exchange of GDP for GTP on eukaryotic initiation factor 2 (eIF2) gamma subunit. Its guanine nucleotide exchange factor activity is repressed when bound to eIF2 complex phosphorylated on the alpha subunit, thereby limiting the amount of methionyl-initiator methionine tRNA available to the ribosome and consequently global translation is repressed. The sequence is that of Translation initiation factor eIF2B subunit delta (Eif2b4) from Rattus norvegicus (Rat).